We begin with the raw amino-acid sequence, 123 residues long: SGSCTTKTCWTTLPKFREIGYILKEKYNAAVQVEVVRASRLRQPTFLKIKQIKSYQKPMETDLVYIEKSPNYCEEDASTGSVGTQGRLCNRTSPNADGCDMMCCGRGYNTHQYTKVWQCNCKF.

The O-palmitoleoyl serine; by PORCN moiety is linked to residue serine 1. The segment at 33 to 61 (VEVVRASRLRQPTFLKIKQIKSYQKPMET) is disordered linker. Cysteine 89 and cysteine 104 are joined by a disulfide. An N-linked (GlcNAc...) asparagine glycan is attached at asparagine 90.

It belongs to the Wnt family. Palmitoleoylation is required for efficient binding to frizzled receptors. Depalmitoleoylation leads to Wnt signaling pathway inhibition.

Its subcellular location is the secreted. The protein localises to the extracellular space. It is found in the extracellular matrix. Functionally, ligand for members of the frizzled family of seven transmembrane receptors that functions in the canonical Wnt/beta-catenin signaling pathway. Required for normal fusion of the chorion and the allantois during placenta development. Required for central nervous system (CNS) angiogenesis and blood-brain barrier regulation. The sequence is that of Protein Wnt-7b (WNT7B) from Anser caerulescens (Snow goose).